We begin with the raw amino-acid sequence, 316 residues long: Ribosomal RNA small subunit methyltransferase H (316 aa).

S-adenosyl-L-methionine contacts are provided by residues Gly35–His37, Asp55, Phe79, Asp101, and Gln108.

Belongs to the methyltransferase superfamily. RsmH family.

The protein localises to the cytoplasm. The catalysed reaction is cytidine(1402) in 16S rRNA + S-adenosyl-L-methionine = N(4)-methylcytidine(1402) in 16S rRNA + S-adenosyl-L-homocysteine + H(+). Functionally, specifically methylates the N4 position of cytidine in position 1402 (C1402) of 16S rRNA. The protein is Ribosomal RNA small subunit methyltransferase H of Aliivibrio fischeri (strain ATCC 700601 / ES114) (Vibrio fischeri).